Reading from the N-terminus, the 152-residue chain is Small ribosomal subunit protein bS6 (152 aa).

Positions 96 to 152 (HEEGPSAMLQKRDRDDRGPREGGDRGPRREFGDRPPRRDGDFQRGPRPDRAPREDRA) are disordered.

This sequence belongs to the bacterial ribosomal protein bS6 family.

Its function is as follows. Binds together with bS18 to 16S ribosomal RNA. The protein is Small ribosomal subunit protein bS6 of Rhizobium etli (strain ATCC 51251 / DSM 11541 / JCM 21823 / NBRC 15573 / CFN 42).